Here is a 466-residue protein sequence, read N- to C-terminus: MGALDEGCLNLELDIGMKNGCIELAFEHQPETLAIQDAVKLLLQGLHEDVNREGIKKTPFRVAKALREGTRGYKQKVKDYVQSALFPEAGLDEGVGQAGGVGGLVVVRDLDHYSYCESCLLPFHVKCHIGYVPSGQRVLGLSKFSRVTDVFAKRLQDPQRLADDICSALQHWVKPAGVAVVLECSHIHFPSLDLDSLNLSSHRGFVKLLVSSGSGVFEDESSNLWGEFQSFLMFKGVKTQALCRNGSSVKEWCPSVKSSSKLSPEVDPEMVSAVVSILKSLGEDPLRKELIATPTRFLKWMLNFQRTNLEMKLNSFNPAKVNGEVKEKRLHCELNMPFWSMCEHHLLPFYGVVHIGYFCAEGSNPNPVGSSLMKAIVHFYGFKLQVQERMTRQIAETLSPLVGGDVIVVAEAGHTCMISRGIEKFGSSTATIAVLGRFSSDNSARAMFLDKIHTTNALKTESSSPF.

3 residues coordinate Zn(2+): Cys342, His345, and Cys416.

Belongs to the GTP cyclohydrolase I family. In terms of assembly, homodimer.

The enzyme catalyses GTP + H2O = 7,8-dihydroneopterin 3'-triphosphate + formate + H(+). Its pathway is cofactor biosynthesis; 7,8-dihydroneopterin triphosphate biosynthesis; 7,8-dihydroneopterin triphosphate from GTP: step 1/1. Its function is as follows. GTP cyclohydrolase 1 is the first enzyme in the biosynthetic pathway leading to folic acid. The polypeptide is GTP cyclohydrolase 1 (GCH1) (Arabidopsis thaliana (Mouse-ear cress)).